The following is a 613-amino-acid chain: V-type proton ATPase catalytic subunit A isoform 1 (613 aa).

240–247 contributes to the ATP binding site; sequence GAFGCGKT.

It belongs to the ATPase alpha/beta chains family. In terms of assembly, V-ATPase is a heteromultimeric enzyme composed of a peripheral catalytic V1 complex (main components: subunits A, B, C, D, E, and F) attached to an integral membrane V0 proton pore complex (main component: the proteolipid protein).

It carries out the reaction ATP + H2O + 4 H(+)(in) = ADP + phosphate + 5 H(+)(out). In terms of biological role, catalytic subunit of the peripheral V1 complex of vacuolar ATPase. V-ATPase vacuolar ATPase is responsible for acidifying a variety of intracellular compartments in eukaryotic cells. This is V-type proton ATPase catalytic subunit A isoform 1 from Acetabularia acetabulum (Mermaid's wine glass).